The primary structure comprises 413 residues: Cardiolipin synthase B (413 aa).

PLD phosphodiesterase domains lie at 108 to 135 and 285 to 312; these read VFRR…SAEH and RRRP…DPLS. Catalysis depends on residues His113, Lys115, Asp120, His290, Lys292, and Asp297. A disordered region spans residues 390–413; it reads VDPPAQPTMETQDRVETENTGVKP.

It belongs to the phospholipase D family. Cardiolipin synthase subfamily. ClsB sub-subfamily.

It localises to the cell membrane. It catalyses the reaction 2 a 1,2-diacyl-sn-glycero-3-phospho-(1'-sn-glycerol) = a cardiolipin + glycerol. Its function is as follows. Catalyzes the phosphatidyl group transfer from one phosphatidylglycerol molecule to another to form cardiolipin (CL) (diphosphatidylglycerol) and glycerol. This Escherichia coli O157:H7 protein is Cardiolipin synthase B.